We begin with the raw amino-acid sequence, 101 residues long: Small ribosomal subunit protein uS14 (101 aa).

Residues 1–20 (MAKTSAVNRNKMRERMASRD) form a disordered region. Residues 11 to 20 (KMRERMASRD) are compositionally biased toward basic and acidic residues.

This sequence belongs to the universal ribosomal protein uS14 family. As to quaternary structure, part of the 30S ribosomal subunit. Contacts proteins S3 and S10.

Functionally, binds 16S rRNA, required for the assembly of 30S particles and may also be responsible for determining the conformation of the 16S rRNA at the A site. The polypeptide is Small ribosomal subunit protein uS14 (Granulibacter bethesdensis (strain ATCC BAA-1260 / CGDNIH1)).